A 90-amino-acid chain; its full sequence is uncharacterized protein (90 aa).

A coiled-coil region spans residues 36-82; the sequence is DQEYSDAQMQLEDAVNALNKLWLSSNDQQREQLYRMRLQLQSLQNNM.

This is an uncharacterized protein from Bacillus subtilis (strain 168).